The sequence spans 248 residues: Leucyl/phenylalanyl-tRNA--protein transferase (248 aa).

It belongs to the L/F-transferase family.

It is found in the cytoplasm. The enzyme catalyses N-terminal L-lysyl-[protein] + L-leucyl-tRNA(Leu) = N-terminal L-leucyl-L-lysyl-[protein] + tRNA(Leu) + H(+). It catalyses the reaction N-terminal L-arginyl-[protein] + L-leucyl-tRNA(Leu) = N-terminal L-leucyl-L-arginyl-[protein] + tRNA(Leu) + H(+). The catalysed reaction is L-phenylalanyl-tRNA(Phe) + an N-terminal L-alpha-aminoacyl-[protein] = an N-terminal L-phenylalanyl-L-alpha-aminoacyl-[protein] + tRNA(Phe). Functions in the N-end rule pathway of protein degradation where it conjugates Leu, Phe and, less efficiently, Met from aminoacyl-tRNAs to the N-termini of proteins containing an N-terminal arginine or lysine. The polypeptide is Leucyl/phenylalanyl-tRNA--protein transferase (Ralstonia pickettii (strain 12J)).